The chain runs to 188 residues: Probable nicotinate-nucleotide adenylyltransferase (188 aa).

This sequence belongs to the NadD family.

The enzyme catalyses nicotinate beta-D-ribonucleotide + ATP + H(+) = deamido-NAD(+) + diphosphate. The protein operates within cofactor biosynthesis; NAD(+) biosynthesis; deamido-NAD(+) from nicotinate D-ribonucleotide: step 1/1. Catalyzes the reversible adenylation of nicotinate mononucleotide (NaMN) to nicotinic acid adenine dinucleotide (NaAD). The sequence is that of Probable nicotinate-nucleotide adenylyltransferase from Salinispora arenicola (strain CNS-205).